We begin with the raw amino-acid sequence, 690 residues long: Hypersensitivity response secretion protein HrcV (690 aa).

A run of 6 helical transmembrane segments spans residues 14–36 (IGIA…TMLI), 48–72 (VVLL…LLLF), 104–128 (LVVG…FIVI), 196–216 (AIAG…IGIT), 229–253 (FAVL…AAGV), and 291–315 (LLMG…LIFV).

It belongs to the FHIPEP (flagella/HR/invasion proteins export pore) family.

The protein localises to the cell inner membrane. In terms of biological role, involved in the secretion of PopA, a proteinaceous elicitor of the hypersensitivity response in plants. This Ralstonia nicotianae (strain ATCC BAA-1114 / GMI1000) (Ralstonia solanacearum) protein is Hypersensitivity response secretion protein HrcV (hrcV).